A 421-amino-acid chain; its full sequence is MPLVEINFDGLVGPSHNYAGLSLGNLASASNAGEVSYPRAAALQGLGKMRHNLALGLTQGLFAPLPRPNPVFLGALGLNAIDEVDQAQRRLRAAAWSASSMWTANAATVSPAPDTPDGRCHLTAANLVTMPHRSQEWPDTVRQLRLAFADAAHFAVHDAVPACFGDEGAANHMRMCKSHDAPGIEIFVYGTTGGAFPARQHEQASRAVARLHGLAPERCLFVEQAPEAIAAGAFHNDVVAVANERVLFTHEQAFANPEATYAAIRERLPEAEIVVVPSSVVSLADAIRSYLFNAQLLTLPSGEMGLVIPVEAWETPSVRGWLEAHLASNGPIRRVLPVDVRQSMANGGGPACLRLRVVADPATVDPRFLLDEARVAIVEEVVRRHWPEQIDPADLGSDILAQTVHGARGALLAALELSELA.

Substrate-binding positions include 19–28 (AGLSLGNLAS), N105, and 132–133 (HR). The active site involves E167. R199 serves as a coordination point for substrate. Residue H235 is part of the active site. D237 and N346 together coordinate substrate. Catalysis depends on C352, which acts as the Nucleophile.

This sequence belongs to the succinylarginine dihydrolase family. As to quaternary structure, homodimer.

The catalysed reaction is N(2)-succinyl-L-arginine + 2 H2O + 2 H(+) = N(2)-succinyl-L-ornithine + 2 NH4(+) + CO2. It participates in amino-acid degradation; L-arginine degradation via AST pathway; L-glutamate and succinate from L-arginine: step 2/5. Functionally, catalyzes the hydrolysis of N(2)-succinylarginine into N(2)-succinylornithine, ammonia and CO(2). The protein is N-succinylarginine dihydrolase of Novosphingobium aromaticivorans (strain ATCC 700278 / DSM 12444 / CCUG 56034 / CIP 105152 / NBRC 16084 / F199).